We begin with the raw amino-acid sequence, 132 residues long: Proline-rich protein sgp2 (132 aa).

The first 20 residues, 1–20, serve as a signal peptide directing secretion; that stretch reads MKYCFVFFVTLICLIANCSA. Disordered stretches follow at residues 23 to 62 and 87 to 132; these read EGDK…SNSR and GASV…LGLP. Residues 36–47 are compositionally biased toward basic and acidic residues; it reads KQIERASDKTSE. Residues 51-62 show a composition bias toward polar residues; it reads GNTNAQGDSNSR. The segment covering 91–105 has biased composition (low complexity); that stretch reads PQLPDLPTTPSLPDM.

The protein localises to the secreted. The protein is Proline-rich protein sgp2 (sgp2) of Glossina morsitans morsitans (Savannah tsetse fly).